Reading from the N-terminus, the 111-residue chain is Probable 4-amino-4-deoxy-L-arabinose-phosphoundecaprenol flippase subunit ArnE (111 aa).

At 1 to 37 (MIWLTLVFASLLSVAGQLCQKQATCFVAINKRRKHIA) the chain is on the cytoplasmic side. A helical transmembrane segment spans residues 38–58 (LWLGLALACLGLAMVLWLLVL). The EamA domain occupies 40 to 109 (LGLALACLGL…IIGGIVILGS (70 aa)). Over 59–60 (QN) the chain is Periplasmic. Residues 61–81 (VPVGIAYPMLSLNFVWVTLAA) traverse the membrane as a helical segment. Residues 82–87 (VKLWHE) lie on the Cytoplasmic side of the membrane. A helical membrane pass occupies residues 88–108 (PVSPRHWCGVAFIIGGIVILG). The Periplasmic segment spans residues 109 to 111 (STV).

This sequence belongs to the ArnE family. As to quaternary structure, heterodimer of ArnE and ArnF.

Its subcellular location is the cell inner membrane. The protein operates within bacterial outer membrane biogenesis; lipopolysaccharide biosynthesis. Functionally, translocates 4-amino-4-deoxy-L-arabinose-phosphoundecaprenol (alpha-L-Ara4N-phosphoundecaprenol) from the cytoplasmic to the periplasmic side of the inner membrane. This is Probable 4-amino-4-deoxy-L-arabinose-phosphoundecaprenol flippase subunit ArnE from Escherichia coli (strain 55989 / EAEC).